The primary structure comprises 1178 residues: MAGRKGTAKVDFLKEIEKEAQQKWEAEKVFEVSASRLEKQKQSSKGKYFVTFPYPYMNGRLHLGHTFSLSKCEFAVGYQRLKGKSCLFPFGLHCTGMPIKACADKLKREIELYGCPPDFPEEEEEEEESSAKPGDIVVRDKAKGKKSKAAAKAGSSKYQWDIMKSLGLSDDDIVKFSEAEHWLDYFPPLAVQDLKTIGLKVDWRRSFITTDVNPYYDSFVRWQFLTLRERNKIKFGKRYTIYSPKDGQPCMDHDRQTGEGVGPQEYTLVKLKVLEPYPSKLSGLKGKNIFLVAATLRPETMFGQTNCWVRPDMKYIGFETANGDIFICTQRAARNMSYQGFTKHNGVVPVVKELMGEEILGASLSAPLTCYKVVYVLPMLTIKEDKGTGVVTSVPSDSPDDLAALRDLKKKQALRTKFGIRDDMVLPFEPVPVLEIPGIGNLPAVTVCDELKIQSQNDREKLAEAKEKLYLRGFYDGVMLVDGFKGQKIQHVKKTIQKNMIDAGDALIYMEPEKQVMSRSADECVVALCDQWYLDYGDENWKKQTFQCLKNMETFCEESRKNFEASLDWLQEHACSRTYGLGTRLPWDEQWLIESLSDSTIYMAFYTVAHLLQGGDLNGQAESPLGIRPQQMTKDVWDYVFFKDAPFPKTQIPKEKLDQLKQEFEFWYPVDLRASGKDLIPNHLSYYIYNHVAMWPEQSDKWPVSVRANGHLLLNSEKMSKSTGNFLTLSQAVDKFSADGMRLALADAGDTVEDANFVEAMADAGILRLYTWVEWVKEMLASCSSLRSGPADSFNDRVFASEMNAGIIKTDQNYEKMMFKEALKTGFFEFQAAKDKYRELATEGMHRELVFRFIEVQTILLTPFCPHLCEHIWTLLGKPDSIMHASWPVAGPVDESLIRSSQYLMEVAHDLRLRLKNYMMPAKGKKTDKQPAQRPSHCTIYVAKNYPVWQHITLTTLRSHFEANNGKLPDNKVIASELGSLPELKKYMKKVMPFVAMIKENMEKKGPRVLDLELEFDEQAVLMENIVYLTNSLELEHIEVKFASEAEDKVREECCPGKPLNVFRTEPGVPVSLVNPQPSSGHFSTKIDIRQGDSCESIIRRLMKTDRGIKDLSKVKLMRFDDPLLGPRRVPVLGREHSEKTLISENAVFHVDLVSKKVHLTENGLRTDIGDTMVYLVH.

Residues Y54 and Y56 each coordinate L-leucine. The short motif at 62–65 (HLGH) is the 'HIGH' region element. At S169 the chain carries Phosphoserine. An editing domain region spans residues 262–511 (GPQEYTLVKL…DAGDALIYME (250 aa)). Positions 596 and 599 each coordinate L-leucine. Residues 718–722 (KMSKS) carry the 'KMSKS' region motif. K721 serves as a coordination point for ATP. S722 carries the phosphoserine modification. An N6-acetyllysine mark is found at K972 and K1049.

The protein belongs to the class-I aminoacyl-tRNA synthetase family.

It is found in the cytoplasm. The enzyme catalyses tRNA(Leu) + L-leucine + ATP = L-leucyl-tRNA(Leu) + AMP + diphosphate. The catalysed reaction is L-methionyl-tRNA(Leu) + H2O = tRNA(Leu) + L-methionine + H(+). 5-fluoro-1,3-dihydro-1-hydroxy-1,2-benzoxaborole inhibits LARS1 by forming a covalent adduct with the 3' adenosine of tRNA(Leu) at the editing site, thus locking the enzyme in an inactive conformation. In terms of biological role, aminoacyl-tRNA synthetase that catalyzes the specific attachment of leucine to its cognate tRNA (tRNA(Leu)). It performs tRNA aminoacylation in a two-step reaction: Leu is initially activated by ATP to form a leucyl-adenylate (Leu-AMP) intermediate; then the leucyl moiety is transferred to the acceptor 3' end of the tRNA to yield leucyl-tRNA. To improve the fidelity of catalytic reactions, it is also able to hydrolyze misactivated aminoacyl-adenylate intermediates (pre-transfer editing) and mischarged aminoacyl-tRNAs (post-transfer editing). The polypeptide is Leucine--tRNA ligase, cytoplasmic (Lars1) (Mus musculus (Mouse)).